We begin with the raw amino-acid sequence, 150 residues long: Ribonuclease H (150 aa).

An RNase H type-1 domain is found at 3 to 144 (DKDMIEIWTD…ADGLARKGTD (142 aa)). Residues Asp-12, Glu-50, Asp-72, and Asp-136 each coordinate Mg(2+). A disordered region spans residues 129–150 (DEGNERADGLARKGTDEVRGRK).

The protein belongs to the RNase H family. In terms of assembly, monomer. Requires Mg(2+) as cofactor.

Its subcellular location is the cytoplasm. It catalyses the reaction Endonucleolytic cleavage to 5'-phosphomonoester.. In terms of biological role, endonuclease that specifically degrades the RNA of RNA-DNA hybrids. In Hyphomonas neptunium (strain ATCC 15444), this protein is Ribonuclease H.